The chain runs to 355 residues: MADKSHVNNVPMQGNGAYSSHAALQHEAMLKALPLFRAAAEAISKVDSTRVAIVEYGSAHGNNSLEPMEAILKSIHARSLELLFSDRPENDFCTLSKTVTEWADGLVENQLLHPLFISMIPRSFYQQVIPPKSAHLGFSLAALHHLDHVPQPTEDGQDESKLLQRQAHVDLATFLKLRSKEIVSGGSLILSFVGQASAGYENYGGPVDACRNAMIQMVQQDKIPVSVAQAFRVPTYNRTLSDVKKLMDEFTQIWKVHDLFEDDVMHPAFYELKIQSNPSQEASHKYAEIVIDWMMAVCSGYFTKALQVGSQGGYTKEEEESLLQDWVTRTKELFIRDHKDEEVICSFIYIRLERL.

5 residues coordinate S-adenosyl-L-homocysteine: Y18, N63, D86, S123, and F124. F231 serves as a coordination point for Mg(2+).

This sequence belongs to the methyltransferase superfamily. Type-7 methyltransferase family. Requires Mg(2+) as cofactor.

Its pathway is mycotoxin biosynthesis. In terms of biological role, methyltransferase; part of the gene cluster that mediates the biosynthesis of the mycotoxin fusarin C. Within the cluster, FUS1, FUS2, FUS8 and FUS9 are sufficient for fusarin production. The roles of the other FUS members are yet undetermined. The fusarin C synthetase FUS1 is responsible for the condensation of one acetyl-coenzyme A (CoA) unit with six malonyl-CoA units and the amide linkage of the arising heptaketide and homoserine, subsequently releasing the first intermediate, prefusarin, as an alcohol with an open ring structure. The cytochrome P450 monooxygenase FUS8 participates in multiple oxidation processes at carbon C-20 and is able to use the FUS1 product as substrate, resulting in formation of 20-hydroxy-prefusarin. This reaction seems to be essential before the 2-pyrrolidone ring closure can be catalyzed by FUS2, generating 20-hydroxy-fusarin. FUS8 is able to further oxidizes carbon C-20 after ring closure, resulting in the formation of carboxy-fusarin C. As the last step, FUS9 methylates the hydroxyl group at C-21 to generate fusarin C. Fusarin C can then rearrange to epi-fusarin C, the (z)-isomers, and fusarin A and fusarin D. This Gibberella moniliformis (strain M3125 / FGSC 7600) (Maize ear and stalk rot fungus) protein is Methyltransferase FUS9.